The chain runs to 1274 residues: Meiosis inhibitor protein 1 (1274 aa).

Expressed predominantly in testis. Weakly expressed in spleen and thymus. Expressed in the ovaries, Fallopian tubes and uterus.

In terms of biological role, required for normal meiotic chromosome synapsis. May be involved in the formation of meiotic double-strand breaks (DSBs) in spermatocytes. In Homo sapiens (Human), this protein is Meiosis inhibitor protein 1.